Consider the following 304-residue polypeptide: UTP--glucose-1-phosphate uridylyltransferase 1 (304 aa).

It belongs to the UDPGP type 2 family.

The catalysed reaction is alpha-D-glucose 1-phosphate + UTP + H(+) = UDP-alpha-D-glucose + diphosphate. The protein operates within carbohydrate metabolism; nucleotide-sugar metabolism. The polypeptide is UTP--glucose-1-phosphate uridylyltransferase 1 (hasC1) (Streptococcus pyogenes serotype M18 (strain MGAS8232)).